We begin with the raw amino-acid sequence, 455 residues long: Oxysterols receptor LXR-beta (455 aa).

A compositionally biased stretch (polar residues) spans M1–D10. The disordered stretch occupies residues M1–S53. Residues M1 to E80 form a transactivation AF-1; required for ligand-independent transactivation function region. Positions P14 to G26 are enriched in low complexity. Positions D79–S156 form a DNA-binding region, nuclear receptor. 2 NR C4-type zinc fingers span residues C82–C102 and C120–C144. Residues K164–E210 are disordered. Positions Q168–G193 are enriched in low complexity. Residues A194–E210 show a composition bias toward gly residues. The transactivation AF-2; required for ligand-dependent transactivation function; mediates interaction with CCAR2 stretch occupies residues L214–E455. The NR LBD domain maps to A217–E455. Glycyl lysine isopeptide (Lys-Gly) (interchain with G-Cter in SUMO2) cross-links involve residues K404 and K442.

Belongs to the nuclear hormone receptor family. NR1 subfamily. In terms of assembly, forms a heterodimer with RXR. Interacts with CCAR2 (via N-terminus) in a ligand-independent manner. Interacts (when sumoylated) with GPS2; interaction with GPS2 onto hepatic acute phase protein promoters prevents N-Cor corepressor complex dissociation. Interacts with ABCA12 and ABCA1; this interaction is required for ABCA1 localization to the cell surface and is necessary for its normal activity and stability. Post-translationally, sumoylated by SUMO2 at Lys-404 and Lys-442 during the hepatic acute phase response, leading to promote interaction with GPS2 and prevent N-Cor corepressor complex dissociation.

Its subcellular location is the nucleus. In terms of biological role, nuclear receptor that exhibits a ligand-dependent transcriptional activation activity. Binds preferentially to double-stranded oligonucleotide direct repeats having the consensus half-site sequence 5'-AGGTCA-3' and 4-nt spacing (DR-4). Regulates cholesterol uptake through MYLIP-dependent ubiquitination of LDLR, VLDLR and LRP8; DLDLR and LRP8. Interplays functionally with RORA for the regulation of genes involved in liver metabolism. Induces LPCAT3-dependent phospholipid remodeling in endoplasmic reticulum (ER) membranes of hepatocytes, driving SREBF1 processing and lipogenesis. Via LPCAT3, triggers the incorporation of arachidonate into phosphatidylcholines of ER membranes, increasing membrane dynamics and enabling triacylglycerols transfer to nascent very low-density lipoprotein (VLDL) particles. Via LPCAT3 also counteracts lipid-induced ER stress response and inflammation, likely by modulating SRC kinase membrane compartmentalization and limiting the synthesis of lipid inflammatory mediators. Plays an anti-inflammatory role during the hepatic acute phase response by acting as a corepressor: inhibits the hepatic acute phase response by preventing dissociation of the N-Cor corepressor complex. This is Oxysterols receptor LXR-beta (NR1H2) from Bos taurus (Bovine).